We begin with the raw amino-acid sequence, 288 residues long: 4-diphosphocytidyl-2-C-methyl-D-erythritol kinase (288 aa).

The active site involves Lys8. ATP is bound at residue 90–100 (PFGAGLGGGSS). Asp132 is an active-site residue.

It belongs to the GHMP kinase family. IspE subfamily.

The enzyme catalyses 4-CDP-2-C-methyl-D-erythritol + ATP = 4-CDP-2-C-methyl-D-erythritol 2-phosphate + ADP + H(+). Its pathway is isoprenoid biosynthesis; isopentenyl diphosphate biosynthesis via DXP pathway; isopentenyl diphosphate from 1-deoxy-D-xylulose 5-phosphate: step 3/6. Functionally, catalyzes the phosphorylation of the position 2 hydroxy group of 4-diphosphocytidyl-2C-methyl-D-erythritol. The chain is 4-diphosphocytidyl-2-C-methyl-D-erythritol kinase from Chlorobium chlorochromatii (strain CaD3).